Consider the following 315-residue polypeptide: tRNA uridine(34) hydroxylase (315 aa).

Residues serine 122–serine 223 form the Rhodanese domain. Residue cysteine 183 is the Cysteine persulfide intermediate of the active site.

This sequence belongs to the TrhO family.

The catalysed reaction is uridine(34) in tRNA + AH2 + O2 = 5-hydroxyuridine(34) in tRNA + A + H2O. Catalyzes oxygen-dependent 5-hydroxyuridine (ho5U) modification at position 34 in tRNAs. This Caulobacter vibrioides (strain ATCC 19089 / CIP 103742 / CB 15) (Caulobacter crescentus) protein is tRNA uridine(34) hydroxylase.